Consider the following 160-residue polypeptide: SsrA-binding protein (160 aa).

It belongs to the SmpB family.

The protein resides in the cytoplasm. Required for rescue of stalled ribosomes mediated by trans-translation. Binds to transfer-messenger RNA (tmRNA), required for stable association of tmRNA with ribosomes. tmRNA and SmpB together mimic tRNA shape, replacing the anticodon stem-loop with SmpB. tmRNA is encoded by the ssrA gene; the 2 termini fold to resemble tRNA(Ala) and it encodes a 'tag peptide', a short internal open reading frame. During trans-translation Ala-aminoacylated tmRNA acts like a tRNA, entering the A-site of stalled ribosomes, displacing the stalled mRNA. The ribosome then switches to translate the ORF on the tmRNA; the nascent peptide is terminated with the 'tag peptide' encoded by the tmRNA and targeted for degradation. The ribosome is freed to recommence translation, which seems to be the essential function of trans-translation. In Salmonella arizonae (strain ATCC BAA-731 / CDC346-86 / RSK2980), this protein is SsrA-binding protein.